A 430-amino-acid polypeptide reads, in one-letter code: Transcription factor PIF4 (430 aa).

Disordered regions lie at residues 42–71, 97–136, 160–183, 223–266, and 405–430; these read QTHR…DQET, MDPL…VMPP, TVGP…SHDR, DRKR…NLSE, and SSPA…RLDH. Residues 43–60 are compositionally biased toward basic and acidic residues; the sequence is THREQTQTQKQDHHEEAL. Over residues 61 to 71 the composition is skewed to polar residues; it reads RSSTFLEDQET. Residues 126-136 are compositionally biased toward pro residues; that stretch reads CPDPPPQVMPP. The segment covering 160 to 175 has biased composition (polar residues); the sequence is TVGPSHCGSNPSQNDL. Positions 244–253 are enriched in low complexity; that stretch reads NKSNQRSGSN. A compositionally biased stretch (basic and acidic residues) spans 257–266; that stretch reads RAAEVHNLSE. Residues 257 to 306 enclose the bHLH domain; that stretch reads RAAEVHNLSERRRRDRINERMKALQELIPHCSKTDKASILDEAIDYLKSL. The segment covering 405 to 419 has biased composition (low complexity); the sequence is SSPAGQQSQQPSSVP.

Belongs to the bHLH protein family. As to quaternary structure, interacts preferentially with the Pfr form of phytochrome B (phyB). Binds DNA as a homodimer, but once bound to DNA, loses its capacity to interact with phyB. Interacts with APRR1/TOC1 and PIF3. Binds to RGL2 and RGA. Forms non-functional heterodimer with HFR1. Interacts with PHYB, CRY1 and CRY2 in the nucleus in response to low blue light (LBL). Interacts with FYPP1 and FYPP3. Associates to PTAC12/HMR/PAP5, which acts as a transcriptional coactivator to trigger the thermoresponsive growth-relevant genes and promote warm-temperature-dependent PIF4 accumulation. Interacts with MED14. As to expression, mainly expressed in leaves, stems and seedlings, and, to a lower extent, in fruits, flowers and roots.

Its subcellular location is the nucleus. Functionally, transcription factor acting negatively in the phytochrome B signaling pathway. May regulate the expression of a subset of genes involved in cell expansion by binding to the G-box motif. Activated by CRY1 and CRY2 in response to low blue light (LBL) by direct binding at chromatin on E-box variant 5'-CA[CT]GTG-3' to stimulate specific gene expression to adapt global physiology (e.g. hypocotyl elongation in low blue light). Element of a PIF4/HMR/MED14-dependent thermoresponsive process; collaboratively with its transcriptional coactivator PTAC12/HMR/PAP5, involved in the regulation of thermoresponsive growth-relevant genes (e.g. mainly involved in biosynthesis and signaling of the phytohormone auxin) leading to daytime warm temperature elicitation of MED14-dependent thermomorphogenesis (e.g. hypocotyl elongation). In Arabidopsis thaliana (Mouse-ear cress), this protein is Transcription factor PIF4.